A 1341-amino-acid polypeptide reads, in one-letter code: DNA-directed RNA polymerase subunit beta (1341 aa).

The protein belongs to the RNA polymerase beta chain family. In terms of assembly, the RNAP catalytic core consists of 2 alpha, 1 beta, 1 beta' and 1 omega subunit. When a sigma factor is associated with the core the holoenzyme is formed, which can initiate transcription.

The catalysed reaction is RNA(n) + a ribonucleoside 5'-triphosphate = RNA(n+1) + diphosphate. DNA-dependent RNA polymerase catalyzes the transcription of DNA into RNA using the four ribonucleoside triphosphates as substrates. The sequence is that of DNA-directed RNA polymerase subunit beta from Photobacterium profundum (strain SS9).